Here is a 298-residue protein sequence, read N- to C-terminus: Developmental pluripotency-associated protein 2 (298 aa).

The tract at residues Asn36 to Gly61 is disordered. The SAP domain maps to Ile92 to Ala126.

Interacts with DPPA4. As to expression, expressed in embryonic stem cells. No expression is seen in 5 months embryo, mesenchymal stem cells, embryonic fibrocytes and adult tissues.

It localises to the nucleus. Its function is as follows. Binds to target gene promoters, including NKX2-5 and SYCE1, but not GATA4, and may be involved in the maintenance of the active epigenetic status of these genes. The protein is Developmental pluripotency-associated protein 2 (DPPA2) of Homo sapiens (Human).